We begin with the raw amino-acid sequence, 94 residues long: Small ribosomal subunit protein eS24 (94 aa).

The protein belongs to the eukaryotic ribosomal protein eS24 family.

The chain is Small ribosomal subunit protein eS24 from Nanoarchaeum equitans (strain Kin4-M).